Here is a 204-residue protein sequence, read N- to C-terminus: MQYSSSSIEALIDAFSRLPGVGRKTARRLAMYVLQQPRLEAERLARALIDVKDRVIRCSVCQNVTDREEDPCSICTSQGRDRTVICVVESPVDVLAFEKTGHYRGLYHVLHGVISPLDGVGPDDIKIRELLGRLSPEGIGGVREIVLALNPTIEGETTSLYLSRLLKPLGVEVTKIARGIPVGAELEFIDEATLSRAMEGRSAV.

A C4-type zinc finger spans residues 58 to 75 (CSVCQNVTDREEDPCSIC). Residues 83-181 (TVICVVESPV…EVTKIARGIP (99 aa)) form the Toprim domain.

It belongs to the RecR family.

In terms of biological role, may play a role in DNA repair. It seems to be involved in an RecBC-independent recombinational process of DNA repair. It may act with RecF and RecO. This chain is Recombination protein RecR, found in Chlorobium luteolum (strain DSM 273 / BCRC 81028 / 2530) (Pelodictyon luteolum).